The following is a 1146-amino-acid chain: Probable phospholipid-transporting ATPase IIB (1146 aa).

The Cytoplasmic segment spans residues 1–143 (MADQIPLYPV…IKNQKYNVFT (143 aa)). A helical membrane pass occupies residues 144-164 (FIPGVLYEQFKFFLNLYFLVV). Over 165 to 172 (SCSQFVPA) the chain is Extracellular. The chain crosses the membrane as a helical span at residues 173 to 193 (LKIGYLYTYWAPLGFVLAVTI). The Cytoplasmic portion of the chain corresponds to 194–381 (AREAIDEFRR…LDLELNQLTK (188 aa)). A helical membrane pass occupies residues 382 to 402 (ALFLALVVLSVVMVTLQGFAG). Topologically, residues 403 to 407 (PWYRN) are extracellular. Residues 408–427 (LFRFLLLFSYIIPISLRVNL) form a helical membrane-spanning segment. Over 428-938 (DMGKAAYGWM…ALGQFVMHRG (511 aa)) the chain is Cytoplasmic. D467 serves as the catalytic 4-aspartylphosphate intermediate. ATP-binding residues include D467, K468, and T469. D467 is a Mg(2+) binding site. T469 lines the Mg(2+) pocket. The segment covering 508 to 519 (VHSQPSGHNPSS) has biased composition (polar residues). The tract at residues 508–535 (VHSQPSGHNPSSAPLRRSQSSTPKVKKS) is disordered. Residues E590, F632, K637, K656, R685, T686, T765, G766, D767, R847, and K853 each coordinate ATP. Residue D873 coordinates Mg(2+). 2 residues coordinate ATP: N876 and D877. D877 serves as a coordination point for Mg(2+). The chain crosses the membrane as a helical span at residues 939-959 (LIISTMQAVFSSVFYFASVPL). Residues 960–961 (YQ) lie on the Extracellular side of the membrane. Residues 962–982 (GFLMVGYATIYTMFPVFSLVL) traverse the membrane as a helical segment. Over 983-1011 (DQDVKPEMAILYPELYKDLTKGRSLSFKT) the chain is Cytoplasmic. A helical transmembrane segment spans residues 1012–1032 (FLIWVLISIYQGGILMYGALL). Residues 1033 to 1040 (LFEDEFVH) lie on the Extracellular side of the membrane. Residues 1041-1061 (VVAISFTALILTELLMVALTI) traverse the membrane as a helical segment. Residues 1062–1065 (RTWH) lie on the Cytoplasmic side of the membrane. A helical transmembrane segment spans residues 1066-1086 (WLMVVAEFLSLGCYVASLAFL). At 1087-1105 (NEYFGIGRVSFGAFLDVAF) the chain is on the extracellular side. Residues 1106-1128 (ITTVTFLWKVSAITVVSCLPLYV) traverse the membrane as a helical segment. Topologically, residues 1129-1146 (LKYLKRKLSPPSYSKLSS) are cytoplasmic.

This sequence belongs to the cation transport ATPase (P-type) (TC 3.A.3) family. Type IV subfamily. Mg(2+) is required as a cofactor. As to expression, found in most tissues except spleen and muscle. Most abundant in testis. Also detected in fetal tissues.

It localises to the golgi apparatus. The protein resides in the trans-Golgi network membrane. It carries out the reaction ATP + H2O + phospholipidSide 1 = ADP + phosphate + phospholipidSide 2.. In Mus musculus (Mouse), this protein is Probable phospholipid-transporting ATPase IIB (Atp9b).